The chain runs to 320 residues: Ferrochelatase (320 aa).

2 residues coordinate Fe cation: H194 and E275.

It belongs to the ferrochelatase family. Monomer.

The protein resides in the cytoplasm. The enzyme catalyses heme b + 2 H(+) = protoporphyrin IX + Fe(2+). Its pathway is porphyrin-containing compound metabolism; protoheme biosynthesis; protoheme from protoporphyrin-IX: step 1/1. Functionally, catalyzes the ferrous insertion into protoporphyrin IX. The polypeptide is Ferrochelatase (Shigella sonnei (strain Ss046)).